The sequence spans 191 residues: Heme-binding protein 1 (191 aa).

Belongs to the HEBP family. In terms of assembly, monomer.

It is found in the cytoplasm. Functionally, may bind free porphyrinogens that may be present in the cell and thus facilitate removal of these potentially toxic compound. Binds with a high affinity to one molecule of heme or porphyrins. It binds metalloporphyrins, free porphyrins and N-methylprotoporphyrin with similar affinities. This chain is Heme-binding protein 1 (HEBP1), found in Bos taurus (Bovine).